A 570-amino-acid polypeptide reads, in one-letter code: AT-rich interactive domain-containing protein 3A (570 aa).

The segment at 102–215 is disordered; sequence AGVPNSSSGH…LAPQAQSQHH (114 aa). The segment covering 120–160 has biased composition (acidic residues); the sequence is DIDDEDDEDDDPELDRGMDDEERDMDEDDSMNEGGGDEDLE. Residue Ser179 is modified to Phosphoserine. The 93-residue stretch at 232-324 folds into the ARID domain; that stretch reads DEKRKEFLDD…YLYPYECEKR (93 aa). Ser356 is modified (phosphoserine). The 95-residue stretch at 429–523 folds into the REKLES domain; sequence AALEQLREKL…GVLFARKPAI (95 aa). Residues 430–473 form an important for nuclear localization region; that stretch reads ALEQLREKLESGEPPEKKVMLMAEEQQRIMQHALQQNLFAMATQ. A homodimerization region spans residues 475–495; that stretch reads PMNIKLNNRDDRQETALNLST. Residues 519-531 form an important for cytoplasmic localization region; sequence RKPAIGFMPSSQR. A disordered region spans residues 528–570; sequence SSQRVHHQHSSQGKSNSPGLSSHIQPSSSASSSASSHGPATSP. Residues Ser542 and Ser569 each carry the phosphoserine modification. Low complexity predominate over residues 548–570; sequence SSHIQPSSSASSSASSHGPATSP.

As to quaternary structure, homodimer.

Its subcellular location is the nucleus. The protein localises to the cytoplasm. Its function is as follows. Transcription factor. The protein is AT-rich interactive domain-containing protein 3A (arid3a) of Danio rerio (Zebrafish).